The sequence spans 376 residues: MSQAIPSSRVGVKINEWYKMIRQFSVPDAEILKAEVEQDIQQMEEDQDLLIYYSLMCFRHQLMLDYLEPGKTYGNRPTVTELLETIETPQKKLTGLLKYYSLFFRGMYEFDQKEYVEAIGYYREAEKELPFVSDDIEKAEFHFKVAEAYYHMKQTHVSMYHILQALDIYQNHPLYSIRTIQSLFVIAGNYDDFKHYDKALPHLEAALELAMDIQNDRFIAISLLNIANSYDRSGDDQMAVEHFQKAAKVSREKVPDLLPKVLFGLSWTLCKAGQTQKAFQFIEEGLDHITARSHKFYKELFLFLQAVYKETVDERKIHDLLSYFEKKNLHAYIEACARSAAAVFESSCHFEQAAAFYRKVLKAQEDILKGECLYAY.

TPR repeat units follow at residues 99-132 (YYSL…LPFV), 139-172 (AEFH…YQNH), 180-213 (IQSL…AMDI), 220-253 (AISL…SREK), 259-292 (PKVL…ITAR), and 334-367 (EACA…QEDI).

It belongs to the Rap family. Homodimer. Interacts with phosphorylated Spo0F. Each RapH protomer is bound to a monomer of Spo0F, forming a heterotetrameric complex. May also interact with non-phosphorylated Spo0F to inhibit the sporulation phosphorelay. Interacts with the C-terminal DNA-binding region of ComA. Does not interact with DegU.

The protein resides in the cytoplasm. Its activity is regulated as follows. Both activities are inhibited by RapH. In terms of biological role, dual specificity regulatory protein that can control both sporulation and competence by acting on two distinct response regulators: Spo0F and ComA, respectively. Is involved in the temporal separation of competence and sporulation. Acts as a phosphatase that specifically dephosphorylates the sporulation initiation phosphotransferase Spo0F and inhibits its activity. RapH can also antagonize sporulation by sterically blocking phosphoryl transfer to and from Spo0F. In addition, inhibits the activity of ComA, a transcriptional factor that regulates the development of genetic competence. Acts by binding to ComA, leading to the inhibition of its DNA-binding activity. In Bacillus subtilis (strain 168), this protein is Response regulator aspartate phosphatase H (rapH).